Consider the following 90-residue polypeptide: Secretoglobin family 1D member 2 (90 aa).

A signal peptide spans 1–21; the sequence is MKLSVCLLLVTLALCCYQANA.

It belongs to the secretoglobin family. Lipophilin subfamily. As to expression, highest expression was found in skeletal muscle. Expressed as well in thymus, trachea, kidney, steroid responsive tissues (prostate, testis, uterus, breast and ovary) and salivary gland.

It is found in the secreted. Its function is as follows. May bind androgens and other steroids, may also bind estramustine, a chemotherapeutic agent used for prostate cancer. May be under transcriptional regulation of steroid hormones. This chain is Secretoglobin family 1D member 2 (SCGB1D2), found in Homo sapiens (Human).